The primary structure comprises 53 residues: Rho GTPase-activating protein 6 (53 aa).

The protein resides in the cytoplasm. Functionally, GTPase activator for the Rho-type GTPases by converting them to an inactive GDP-bound state. Could regulate the interactions of signaling molecules with the actin cytoskeleton. Promotes continuous elongation of cytoplasmic processes during cell motility and simultaneous retraction of the cell body changing the cell morphology. In Takifugu rubripes (Japanese pufferfish), this protein is Rho GTPase-activating protein 6 (arhgap6).